The following is a 133-amino-acid chain: ATP synthase epsilon chain (133 aa).

The segment at 103 to 133 is disordered; that stretch reads VSQMEGQEPSTEKIKAQQNFNRARARVQATK.

This sequence belongs to the ATPase epsilon chain family. F-type ATPases have 2 components, CF(1) - the catalytic core - and CF(0) - the membrane proton channel. CF(1) has five subunits: alpha(3), beta(3), gamma(1), delta(1), epsilon(1). CF(0) has three main subunits: a, b and c.

It is found in the cellular thylakoid membrane. Its function is as follows. Produces ATP from ADP in the presence of a proton gradient across the membrane. This Prochlorococcus marinus (strain MIT 9313) protein is ATP synthase epsilon chain.